Here is a 910-residue protein sequence, read N- to C-terminus: E3 ubiquitin-protein ligase HUL5 (910 aa).

The residue at position 1 (M1) is an N-acetylmethionine. The tract at residues 1–25 (MLNFTGQTRRRNVNLGNRTRNSKKD) is disordered. Positions 810-910 (YGGYKEEDQT…INSGARFDLS (101 aa)) constitute an HECT domain. Residue C878 is the Glycyl thioester intermediate of the active site.

It belongs to the UBE3C family. In terms of assembly, interacts with 19S proteasomes.

The protein resides in the cytoplasm. Its subcellular location is the cytosol. It is found in the nucleus. It carries out the reaction S-ubiquitinyl-[E2 ubiquitin-conjugating enzyme]-L-cysteine + [acceptor protein]-L-lysine = [E2 ubiquitin-conjugating enzyme]-L-cysteine + N(6)-ubiquitinyl-[acceptor protein]-L-lysine.. It participates in protein modification; protein ubiquitination. Functionally, non-essential E3 ubiquitin-protein ligase that specifically catalyzes 'Lys-29'- and 'Lys-48'-linked polyubiquitin chains. Accepts ubiquitin from an E2 ubiquitin-conjugating enzyme in the form of a thioester and then directly transfers the ubiquitin to targeted substrates. Associates with the proteasome and promotes elongation of ubiquitin chains on substrates bound to the proteasome. Elongation of ubiquitin chains on substrates bound to the proteasome promotes proteasomal processivity. Also promotes ubiquitin elongation of 26S proteasome subunit RPN10. Involved in the stress response required to maintain cell fitness following heat-shock: acts by mediating ubiquitination of cytosolic misfolded proteins, leading to their subsequent degradation. This chain is E3 ubiquitin-protein ligase HUL5, found in Saccharomyces cerevisiae (strain ATCC 204508 / S288c) (Baker's yeast).